We begin with the raw amino-acid sequence, 86 residues long: Large ribosomal subunit protein eL43 (86 aa).

C40, C43, C58, and C61 together coordinate Zn(2+). The C4-type zinc-finger motif lies at 40–61; sequence CPFCRSKAVIREAYGIYRCKKC.

It belongs to the eukaryotic ribosomal protein eL43 family. Putative zinc-binding subfamily. In terms of assembly, part of the 50S ribosomal subunit. Zn(2+) is required as a cofactor.

In terms of biological role, binds to the 23S rRNA. This chain is Large ribosomal subunit protein eL43, found in Nanoarchaeum equitans (strain Kin4-M).